A 233-amino-acid chain; its full sequence is Enolase-phosphatase E1 (233 aa).

Mg(2+) is bound by residues Asp-16 and Glu-18. Substrate contacts are provided by residues Ser-131–Ser-132 and Lys-167. Asp-193 provides a ligand contact to Mg(2+).

This sequence belongs to the HAD-like hydrolase superfamily. MasA/MtnC family. Monomer. Requires Mg(2+) as cofactor.

Its subcellular location is the cytoplasm. The protein resides in the nucleus. It catalyses the reaction 5-methylsulfanyl-2,3-dioxopentyl phosphate + H2O = 1,2-dihydroxy-5-(methylsulfanyl)pent-1-en-3-one + phosphate. Its pathway is amino-acid biosynthesis; L-methionine biosynthesis via salvage pathway; L-methionine from S-methyl-5-thio-alpha-D-ribose 1-phosphate: step 3/6. It functions in the pathway amino-acid biosynthesis; L-methionine biosynthesis via salvage pathway; L-methionine from S-methyl-5-thio-alpha-D-ribose 1-phosphate: step 4/6. Its function is as follows. Bifunctional enzyme that catalyzes the enolization of 2,3-diketo-5-methylthiopentyl-1-phosphate (DK-MTP-1-P) into the intermediate 2-hydroxy-3-keto-5-methylthiopentenyl-1-phosphate (HK-MTPenyl-1-P), which is then dephosphorylated to form the acireductone 1,2-dihydroxy-3-keto-5-methylthiopentene (DHK-MTPene). This chain is Enolase-phosphatase E1, found in Meyerozyma guilliermondii (strain ATCC 6260 / CBS 566 / DSM 6381 / JCM 1539 / NBRC 10279 / NRRL Y-324) (Yeast).